A 606-amino-acid polypeptide reads, in one-letter code: Mitogen-activated protein kinase kinase kinase 7 (606 aa).

Residues 1-300 (MSTASAASSS…FPGADEPLQY (300 aa)) are interaction with MAPK8IP1. One can recognise a Protein kinase domain in the interval 36-291 (IEVEEVVGRG…KIMTHLMRYF (256 aa)). ATP contacts are provided by residues 42 to 50 (VGRGAFGVV) and Lys63. Lys72 participates in a covalent cross-link: Glycyl lysine isopeptide (Lys-Gly) (interchain with G-Cter in ubiquitin). The active-site Proton acceptor is Asp156. Lys158 participates in a covalent cross-link: Glycyl lysine isopeptide (Lys-Gly) (interchain with G-Cter in ubiquitin). Phosphothreonine; by autocatalysis is present on residues Thr184 and Thr187. Ser192 is modified (phosphoserine; by autocatalysis). Residue Lys209 forms a Glycyl lysine isopeptide (Lys-Gly) (interchain with G-Cter in ubiquitin) linkage. Disordered stretches follow at residues 301-338 (PCQY…MEQV) and 354-391 (KNQA…MSAD). Over residues 306-338 (DEGQSNSATSTGSFMDIASTNTSNKSDTNMEQV) the composition is skewed to polar residues. A compositionally biased stretch (low complexity) spans 361-375 (SESGRLSLGASRGSS). Residues Ser367, Ser389, and Ser439 each carry the phosphoserine modification. Over residues 443 to 452 (LTVTGTEPGQ) the composition is skewed to polar residues. Residues 443 to 493 (LTVTGTEPGQVSSRSSSPSVRMITTSGPTSEKPTRSHPWTPDDSTDTNGSD) form a disordered region. Over residues 453–463 (VSSRSSSPSVR) the composition is skewed to low complexity. Ser455 carries the post-translational modification Phosphoserine. Polar residues predominate over residues 464–473 (MITTSGPTSE).

This sequence belongs to the protein kinase superfamily. STE Ser/Thr protein kinase family. MAP kinase kinase kinase subfamily. In terms of assembly, can form homodimer. Binds both upstream activators and downstream substrates in multimolecular complexes. Interacts with TAB1/MAP3K7IP1, TAB2/MAP3K7IP2 and TAB3/MAP3K7IP3. Identified in the TRIKA2 complex composed of MAP3K7/TAK1, TAB1/MAP3K7IP1 and TAB2/MAP3K7IP2. Interacts with PPM1L and PPM1B/PP2CB. Interaction with PP2A and PPP6C leads to its repressed activity. Interacts with TRAF6 and TAB1/MAP3K7IP1; during IL-1 signaling. Interacts with TAOK1 and TAOK2; interaction with TAOK2 interferes with MAP3K7 interaction with IKKA, thus preventing NF-kappa-B activation. Interacts with DYNC2I2 (via WD domains). Interacts with CYLD and RBCK1. Interacts with TGFBR1; induces MAP3K7/TAK1 activation by TRAF6. Interacts with MAPK8IP1 and SMAD6. Interacts with isoform 1 of VRK2. Interacts with DAB2; the interaction is induced by TGF-beta stimulation and may mediate TGF-beta stimulated JNK activation. Interacts with TRIM5. Part of a complex containing ITCH, NDFIP1 and MAP3K7. Interacts with IFIT5; the interaction synergizes the recruitment of IKK to MAP3K7 and enhances IKK phosphorylation. Interacts with PLEKHM1 (via N- and C-terminus). Found in a complex with SH3RF1, RAC2, MAP2K7/MKK7, MAPK8IP1/JIP1, MAPK8/JNK1 and MAPK9/JNK2. Interacts with SASH1. Interacts with RIPK1. Mg(2+) is required as a cofactor. Association with TAB1/MAP3K7IP1 promotes autophosphorylation at Ser-192 and subsequent activation. Association with TAB2/MAP3K7IP2, itself associated with free unanchored Lys-63 polyubiquitin chain, promotes autophosphorylation and subsequent activation of MAP3K7. Dephosphorylation at Ser-192 by PPM1B/PP2CB and at Thr-187 by PP2A and PPP6C leads to inactivation. In terms of processing, 'Lys-48'-linked polyubiquitination at Lys-72 is induced by TNFalpha, and leads to proteasomal degradation. Undergoes 'Lys-48'-linked polyubiquitination catalyzed by ITCH. 'Lys-63'-linked polyubiquitination at Lys-158 by TRIM8 does not lead to proteasomal degradation but contributes to autophosphorylation and activation. Deubiquitinated by CYLD, a protease that selectively cleaves 'Lys-63'-linked ubiquitin chains. Deubiquitinated by USP19; leading to negative regulation of TNF-alpha- and IL-1beta-triggered NF-kappa-B activation.

It localises to the cytoplasm. Its subcellular location is the cell membrane. It catalyses the reaction L-seryl-[protein] + ATP = O-phospho-L-seryl-[protein] + ADP + H(+). It carries out the reaction L-threonyl-[protein] + ATP = O-phospho-L-threonyl-[protein] + ADP + H(+). Activated by pro-inflammatory cytokines and in response to physical and chemical stresses, including osmotic stress, oxidative stress, arsenic and ultraviolet light irradiation. Activated by 'Lys-63'-linked polyubiquitination and by autophosphorylation. Association with TAB1/MAP3K7IP1 and TAB2/MAP3K7IP2 promotes activation through autophosphorylation, whereas PPM1B/PP2CB, PP2A and PPP6C dephosphorylation leads to inactivation. Ceramides are also able to activate MAP3K7/TAK1. Serine/threonine kinase which acts as an essential component of the MAP kinase signal transduction pathway. Plays an important role in the cascades of cellular responses evoked by changes in the environment. Mediates signal transduction of TRAF6, various cytokines including interleukin-1 (IL-1), transforming growth factor-beta (TGFB), TGFB-related factors like BMP2 and BMP4, toll-like receptors (TLR), tumor necrosis factor receptor CD40 and B-cell receptor (BCR). Once activated, acts as an upstream activator of the MKK/JNK signal transduction cascade and the p38 MAPK signal transduction cascade through the phosphorylation and activation of several MAP kinase kinases like MAP2K1/MEK1, MAP2K3/MKK3, MAP2K6/MKK6 and MAP2K7/MKK7. These MAP2Ks in turn activate p38 MAPKs and c-jun N-terminal kinases (JNKs); both p38 MAPK and JNK pathways control the transcription factors activator protein-1 (AP-1). Independently of MAP2Ks and p38 MAPKs, acts as a key activator of NF-kappa-B by promoting activation of the I-kappa-B-kinase (IKK) core complex. Mechanistically, recruited to polyubiquitin chains of RIPK2 and IKBKG/NEMO via TAB2/MAP3K7IP2 and TAB3/MAP3K7IP3, and catalyzes phosphorylation and activation of IKBKB/IKKB component of the IKK complex, leading to NF-kappa-B activation. In osmotic stress signaling, plays a major role in the activation of MAPK8/JNK1, but not that of NF-kappa-B. Promotes TRIM5 capsid-specific restriction activity. Phosphorylates RIPK1 at 'Ser-321' which positively regulates RIPK1 interaction with RIPK3 to promote necroptosis but negatively regulates RIPK1 kinase activity and its interaction with FADD to mediate apoptosis. Phosphorylates STING1 in response to cGAMP-activation, promoting association between STEEP1 and STING1 and STING1 translocation to COPII vesicles. The polypeptide is Mitogen-activated protein kinase kinase kinase 7 (MAP3K7) (Pongo abelii (Sumatran orangutan)).